Consider the following 122-residue polypeptide: Large ribosomal subunit protein uL14 (122 aa).

This sequence belongs to the universal ribosomal protein uL14 family. Part of the 50S ribosomal subunit. Forms a cluster with proteins L3 and L19. In the 70S ribosome, L14 and L19 interact and together make contacts with the 16S rRNA in bridges B5 and B8.

Its function is as follows. Binds to 23S rRNA. Forms part of two intersubunit bridges in the 70S ribosome. In Prosthecochloris aestuarii (strain DSM 271 / SK 413), this protein is Large ribosomal subunit protein uL14.